The chain runs to 819 residues: Probable cadmium/zinc-transporting ATPase HMA1, chloroplastic (819 aa).

A chloroplast-targeting transit peptide spans 1–17 (MEPATLTRSSSLTRFPY). Topologically, residues 18–122 (RRGLSTLRLA…IGWVRLANYL (105 aa)) are stromal. Over residues 66–79 (DHHHDHHHDDEQDH) the composition is skewed to basic and acidic residues. Positions 66-87 (DHHHDHHHDDEQDHHNHHHHHH) are disordered. Residues 123 to 144 (REHLHLCCSAAAMFLAAAVCPY) form a helical membrane-spanning segment. Residues 145–153 (LAPEPYIKS) are Lumenal-facing. A helical transmembrane segment spans residues 154-173 (LQNAFMIVGFPLVGVSASLD). The Stromal segment spans residues 174–180 (ALMDIAG). The helical transmembrane segment at 181-201 (GKVNIHVLMALAAFASVFMGN) threads the bilayer. A202 is a topological domain (lumenal). The helical transmembrane segment at 203 to 223 (LEGGLLLAMFNLAHIAEEFFT) threads the bilayer. Topologically, residues 224–361 (SRSMVDVKEL…KPKLQRWLDE (138 aa)) are stromal. The chain crosses the membrane as a helical span at residues 362-384 (FGENYSKVVVVLSLAIAFLGPFL). Topologically, residues 385–398 (FKWPFLSTAACRGS) are lumenal. A helical transmembrane segment spans residues 399 to 416 (VYRALGLMVAASPCALAV). Residues 417–737 (APLAYATAIS…AKSRQTTSLV (321 aa)) lie on the Stromal side of the membrane. The active-site 4-aspartylphosphate intermediate is D453. Mg(2+) is bound by residues E682 and D686. The helical transmembrane segment at 738 to 757 (KQNVALALTSIFLAALPSVL) threads the bilayer. Residues 758 to 762 (GFVPL) lie on the Lumenal side of the membrane. Residues 763-781 (WLTVLLHEGGTLLVCLNSV) form a helical membrane-spanning segment. The Stromal segment spans residues 782 to 819 (RGLNDPSWSWKQDIVHLINKLRSQEPTSSSSNSLSSAH).

This sequence belongs to the cation transport ATPase (P-type) (TC 3.A.3) family. Type IB subfamily.

Its subcellular location is the plastid. The protein localises to the chloroplast inner membrane. The catalysed reaction is Zn(2+)(in) + ATP + H2O = Zn(2+)(out) + ADP + phosphate + H(+). It catalyses the reaction Cd(2+)(in) + ATP + H2O = Cd(2+)(out) + ADP + phosphate + H(+). Functionally, involved in cadmium/zinc transport. This is Probable cadmium/zinc-transporting ATPase HMA1, chloroplastic (HMA1) from Arabidopsis thaliana (Mouse-ear cress).